The sequence spans 249 residues: Aspartate/glutamate leucyltransferase (249 aa).

It belongs to the R-transferase family. Bpt subfamily.

It is found in the cytoplasm. It carries out the reaction N-terminal L-glutamyl-[protein] + L-leucyl-tRNA(Leu) = N-terminal L-leucyl-L-glutamyl-[protein] + tRNA(Leu) + H(+). The enzyme catalyses N-terminal L-aspartyl-[protein] + L-leucyl-tRNA(Leu) = N-terminal L-leucyl-L-aspartyl-[protein] + tRNA(Leu) + H(+). Functionally, functions in the N-end rule pathway of protein degradation where it conjugates Leu from its aminoacyl-tRNA to the N-termini of proteins containing an N-terminal aspartate or glutamate. In Xanthobacter autotrophicus (strain ATCC BAA-1158 / Py2), this protein is Aspartate/glutamate leucyltransferase.